The primary structure comprises 473 residues: Mogroside IIIx synthase (473 aa).

The active-site Proton acceptor is His-21. Catalysis depends on Asp-123, which acts as the Charge relay. Residues Thr-274, Gln-337, Trp-355, Asn-356, Ser-357, Glu-360, Asp-376, and Gln-377 each contribute to the UDP-alpha-D-glucose site.

It belongs to the UDP-glycosyltransferase family. As to expression, highly expressed in mature fruits.

It catalyses the reaction mogroside IIE + UDP-alpha-D-glucose = mogroside IIIX + UDP + H(+). The enzyme catalyses mogroside III + UDP-alpha-D-glucose = siamenoside I + UDP + H(+). Its pathway is secondary metabolite biosynthesis; terpenoid biosynthesis. Functionally, UDP-glycosyltransferase involved in the biosynthesis of cucurbitacin and mogroside tetracyclic triterpene natural products (e.g. siamenoside I and mogrosides IV, V and VI). Cucurbitacins have cytotoxic properties and exhibit deterrent taste as a defense barrier against herbivores. Mogrosides are nonsugar highly oxygenated compounds used as high-intensity zero-calorie sweeteners; they also possess pharmacological properties such as regulating immunity, lowering blood sugar and lipid levels, protecting the liver, and acting as antioxidants and antitumor agents. Catalyzes the branched glucosylations of mogroside II-E and mogroside III. In Siraitia grosvenorii (Monk's fruit), this protein is Mogroside IIIx synthase.